A 483-amino-acid chain; its full sequence is MGFTVAIVGRPNVGKSTLFNRLVGRKLALVDDLPGVTRDRRIHDAKLYDLKFQVIDTAGLEEAANDSLEARMRAQTEAAIQEADVILFVVDAKNGLTPTDSTFAEVVRRSGKPVVLVANKAEARGAQSGMYDAFQLGLGEPCPISAEHGQGMPDLRDAIVELLGEERVFADEKEEETADEVFTPKAVGELIGDDIEDPDEEEIPAYDATKPLRIAIVGRPNAGKSTLINTMLGEDRLLTGPEAGITRDSISVDWEWRGRKIKLFDTAGLRRKSRVQEKLEKLSVADGLRAIRFAEVVIIVLDATIPFEKQDLQIADLIIREGRAPIIAFNKWDLIEDRQMVLADLYEKTARLLPQVRGLRAVPISGERGQGIDKLMENVVKTHEIWNRRVSTGRLNRWLAGVIAHQPPPAVSGRRLKVKYMTQVKTRPPGFVVSCSRPDAMPQSYVRYLINGLRETFDMPGVPIRLSLRTSDNPFAGRAKKKK.

EngA-type G domains lie at 3–167 (FTVA…GEER) and 212–387 (LRIA…EIWN). GTP-binding positions include 9–16 (GRPNVGKS), 56–60 (DTAGL), 119–122 (NKAE), 218–225 (GRPNAGKS), 265–269 (DTAGL), and 330–333 (NKWD). The KH-like domain occupies 388-472 (RRVSTGRLNR…PIRLSLRTSD (85 aa)).

It belongs to the TRAFAC class TrmE-Era-EngA-EngB-Septin-like GTPase superfamily. EngA (Der) GTPase family. As to quaternary structure, associates with the 50S ribosomal subunit.

Functionally, GTPase that plays an essential role in the late steps of ribosome biogenesis. The protein is GTPase Der of Brucella anthropi (strain ATCC 49188 / DSM 6882 / CCUG 24695 / JCM 21032 / LMG 3331 / NBRC 15819 / NCTC 12168 / Alc 37) (Ochrobactrum anthropi).